The following is a 233-amino-acid chain: 2-C-methyl-D-erythritol 4-phosphate cytidylyltransferase (233 aa).

It belongs to the IspD/TarI cytidylyltransferase family. IspD subfamily.

It catalyses the reaction 2-C-methyl-D-erythritol 4-phosphate + CTP + H(+) = 4-CDP-2-C-methyl-D-erythritol + diphosphate. It participates in isoprenoid biosynthesis; isopentenyl diphosphate biosynthesis via DXP pathway; isopentenyl diphosphate from 1-deoxy-D-xylulose 5-phosphate: step 2/6. In terms of biological role, catalyzes the formation of 4-diphosphocytidyl-2-C-methyl-D-erythritol from CTP and 2-C-methyl-D-erythritol 4-phosphate (MEP). This Geotalea uraniireducens (strain Rf4) (Geobacter uraniireducens) protein is 2-C-methyl-D-erythritol 4-phosphate cytidylyltransferase.